Consider the following 888-residue polypeptide: Protein translocase subunit SecA (888 aa).

ATP contacts are provided by residues Q81, 99–103, and D489; that span reads GEGKT.

The protein belongs to the SecA family.

It is found in the plastid. It localises to the chloroplast stroma. The protein localises to the chloroplast thylakoid membrane. The catalysed reaction is ATP + H2O + cellular proteinSide 1 = ADP + phosphate + cellular proteinSide 2.. Its function is as follows. Has a central role in coupling the hydrolysis of ATP to the transfer of proteins across the thylakoid membrane. The sequence is that of Protein translocase subunit SecA from Trieres chinensis (Marine centric diatom).